The following is a 471-amino-acid chain: Alpha-galactosidase (471 aa).

An N-terminal signal peptide occupies residues M1–W18. C42 and C74 form a disulfide bridge. N43 is a glycosylation site (N-linked (GlcNAc...) asparagine). Residues D72 and D73 each coordinate substrate. The N-linked (GlcNAc...) asparagine glycan is linked to N105. The cysteines at positions 121 and 151 are disulfide-linked. Position 147 (K147) interacts with substrate. D149 acts as the Nucleophile in catalysis. N-linked (GlcNAc...) asparagine glycosylation occurs at N175. R205 contributes to the substrate binding site. D209 serves as the catalytic Proton donor. 2 disulfide bridges follow: C221–C237 and C223–C230. Q251 contacts substrate. Residues N270, N370, N403, N417, N422, and N454 are each glycosylated (N-linked (GlcNAc...) asparagine).

The protein belongs to the glycosyl hydrolase 27 family. In terms of assembly, homotetramer.

The protein resides in the secreted. It carries out the reaction Hydrolysis of terminal, non-reducing alpha-D-galactose residues in alpha-D-galactosides, including galactose oligosaccharides, galactomannans and galactolipids.. This Saccharomyces paradoxus (Yeast) protein is Alpha-galactosidase (MEL).